The primary structure comprises 159 residues: Ribonuclease H (159 aa).

One can recognise an RNase H type-1 domain in the interval 2–144 (SQDPVIIHTD…ADELATRGLQ (143 aa)). 4 residues coordinate Mg(2+): aspartate 11, glutamate 50, aspartate 72, and aspartate 136.

The protein belongs to the RNase H family. As to quaternary structure, monomer. Requires Mg(2+) as cofactor.

It is found in the cytoplasm. It catalyses the reaction Endonucleolytic cleavage to 5'-phosphomonoester.. Functionally, endonuclease that specifically degrades the RNA of RNA-DNA hybrids. This Mycolicibacterium smegmatis (strain ATCC 700084 / mc(2)155) (Mycobacterium smegmatis) protein is Ribonuclease H.